We begin with the raw amino-acid sequence, 386 residues long: Bifunctional desaturase/conjugase FADX (386 aa).

Residues 1–28 form a disordered region; the sequence is MGAGGRMSVAPNNSKCEKKESRSVKRVP. The next 2 membrane-spanning stretches (helical) occupy residues 65–85 and 87–107; these read LSFI…SPIT and IAWP…WVLG. The Histidine box-1 signature appears at 108 to 112; the sequence is HECGH. Positions 144–148 match the Histidine box-2 motif; it reads HRRHH. The next 3 helical transmembrane spans lie at 182 to 202, 228 to 248, and 250 to 270; these read ALTL…FNVS, IYIS…IAMA, and GLAW…ALVV. The Histidine box-3 signature appears at 318–322; that stretch reads HVIHH.

Belongs to the fatty acid desaturase type 1 family. Expressed exclusively in developing seeds.

It is found in the endoplasmic reticulum membrane. The enzyme catalyses a (9Z,12Z)-octadecadienoyl-containing glycerolipid + 2 Fe(II)-[cytochrome b5] + O2 + 2 H(+) = a (9Z,11E,13E)-octadecatrienoyl-containing glycerolipid + 2 Fe(III)-[cytochrome b5] + 2 H2O. It carries out the reaction (9Z,12Z,15Z)-octadecatrienoyl-containing glycerolipid + 2 Fe(II)-[cytochrome b5] + O2 + 2 H(+) = a (9Z,11E,13E,15Z)-octadecatetraenoyl-containing glycerolipid + 2 Fe(III)-[cytochrome b5] + 2 H2O. It catalyses the reaction a (9Z)-octadecenoyl-containing glycerolipid + 2 Fe(II)-[cytochrome b5] + O2 + 2 H(+) = a (9Z,12E)-octadecadienoyl-containing glycerolipid + 2 Fe(III)-[cytochrome b5] + 2 H2O. The catalysed reaction is a (9Z)-hexadecenoyl-containing glycerolipid + 2 Fe(II)-[cytochrome b5] + O2 + 2 H(+) = a (9Z,12E)-hexadecadienoyl-containing glycerolipid + 2 Fe(III)-[cytochrome b5] + 2 H2O. Its pathway is lipid metabolism; polyunsaturated fatty acid biosynthesis. Its function is as follows. Converts linoleic acid to alpha-eleostearic acid (18:3(9Z,11E,13E)) and alpha-linolenic acid to alpha-parinaric acid (18:4(9Z,11E,13E,15Z)). Converts a single cis double bond at carbon 12 to two conjugated trans bonds at positions 11 and 13. Can also act as a 12(E) desaturase when acting on the monounsaturated fatty acids oleate and palmitoleate, stereoselectively introducing a trans double bond. This Vernicia fordii (Tung) protein is Bifunctional desaturase/conjugase FADX.